We begin with the raw amino-acid sequence, 539 residues long: 2-isopropylmalate synthase (539 aa).

The 262-residue stretch at 8-269 folds into the Pyruvate carboxyltransferase domain; it reads VLIFDTTLRD…YFNPFFGRPP (262 aa). 4 residues coordinate Mn(2+): aspartate 17, histidine 208, histidine 210, and asparagine 244. Positions 408-539 are regulatory domain; the sequence is QLKLVQVSCG…DLAKVEKKGI (132 aa).

This sequence belongs to the alpha-IPM synthase/homocitrate synthase family. LeuA type 1 subfamily. As to quaternary structure, homodimer. Mn(2+) is required as a cofactor.

It is found in the cytoplasm. The enzyme catalyses 3-methyl-2-oxobutanoate + acetyl-CoA + H2O = (2S)-2-isopropylmalate + CoA + H(+). Its pathway is amino-acid biosynthesis; L-leucine biosynthesis; L-leucine from 3-methyl-2-oxobutanoate: step 1/4. Functionally, catalyzes the condensation of the acetyl group of acetyl-CoA with 3-methyl-2-oxobutanoate (2-ketoisovalerate) to form 3-carboxy-3-hydroxy-4-methylpentanoate (2-isopropylmalate). This Prochlorococcus marinus (strain NATL2A) protein is 2-isopropylmalate synthase.